We begin with the raw amino-acid sequence, 428 residues long: CRISPR system endoribonuclease Csm6 (428 aa).

Residues 1–145 form a CARF domain region; it reads MKILISAVGT…RANREYTALT (145 aa). Residues 146–428 are HEPN domain; the sequence is ESEIDALIME…QNKELIKMLE (283 aa).

It belongs to the CRISPR-associated Csm6 family. In terms of assembly, homodimer. The composite ssRNase active site is formed at the dimer interface.

With respect to regulation, non-specific ssRNase activity is allosterically activated about 1000-fold by cyclic hexaadenylate (cA6), a second messenger produced by Cas10 of the ternary Csm effector complex in the presence of a cognate target RNA. ssRNase activity is inhibited by physiological concentrations of ATP (1 mM), activity is restored by cOA. CRISPR (clustered regularly interspaced short palindromic repeat) is an adaptive immune system that provides protection against mobile genetic elements (viruses, transposable elements and conjugative plasmids). CRISPR clusters contain spacers, sequences complementary to antecedent mobile elements, and target invading nucleic acids. CRISPR clusters are transcribed and processed into CRISPR RNA (crRNA). The type III-A Csm complex binds crRNA and acts as a crRNA-guided RNase, DNase and cyclic oligoadenylate synthase; binding of target RNA cognate to the crRNA is required for all activities. In a heterologous host this Csm effector complex restricts ssRNA phage MS2, suggesting it may target RNA viruses in vivo. This protein is not part of the Csm complex. Functionally, csm functions as a non-specific ssDNase. Base-pairing between crRNA and target RNA to form a ternary Csm complex activates a ssDNase activity; target RNA cleavage suppresses the ssDNase, a temporal control that prevents uncontrolled DNA degradation. Viral RNA transcripts probably tether the Csm complex to the viral genome, recruiting Cas10 ssDNA activity which is able to degrade DNA in the transcription bubble, spatially controlling the DNase activity. Its function is as follows. A single-strand-specific endoribonuclease (ssRNase) that is approximately 1000-fold stimulated by cyclic oligoadenylate (cOA); although several species of cOA are synthesized by this organism only cyclic hexaadenylate (cA6) stimulates the ssRNase activity. Cleaves preferentially within GA or AA dinucleotides, although the presence of cA6 broadens the preference. Linear oligoadenylates do not activate the RNase. The sequence is that of CRISPR system endoribonuclease Csm6 from Streptococcus thermophilus.